The sequence spans 347 residues: MTTLLQLLSNYYKAKLDSERIYNEYVQSQYEFASLDKLNNNKGDPKKVVDETLFLQRQIAQLNKQLQLSFQENEKLLSVQKNQKALYQSKLSSKDAFIDDLKLKLKVEQISVDKHNKERTPSTGRDEQQRNSKAAHTSKPTIHLLSPIVNRDKPNNQTNDRGGNDPDSPTSQRRSRGLRSLLSSGKNTIFDSISKNLDDEINENAHIRNDTTSSKIAGKSPSRLSALQKSPELRKERNNMILKEHILRSKDDQNITSSRKLDNIELSSIGDSTAMTSRSSTVNANDILGNEENDGITKLKRVNKLTSSPVKRDCSTNKKRKLTKQRIATLPNSDEELSNNLNVDEFV.

Positions 46 to 118 (KKVVDETLFL…QISVDKHNKE (73 aa)) form a coiled coil. Positions 112–130 (VDKHNKERTPSTGRDEQQR) are enriched in basic and acidic residues. 2 disordered regions span residues 112-183 (VDKH…SLLS) and 208-230 (RNDT…LQKS). Polar residues-rich tracts occupy residues 131–140 (NSKAAHTSKP) and 155–172 (NNQT…PTSQ). S168 and S230 each carry phosphoserine.

In terms of assembly, component of the monopolin complex composed of at least CSM1, LRS4 and MAM1. The complex associates with the kinetochore. In terms of processing, phosphorylated by CDC5. This phosphorylation is required for the location to the kinetochores during late pachytene.

It is found in the nucleus. The protein localises to the nucleolus. The protein resides in the chromosome. Its subcellular location is the centromere. Functionally, component of the monopolin complex which promotes monoorientation during meiosis I, required for chromosome segregation during meiosis. Involved in rDNA silencing. This Saccharomyces cerevisiae (strain ATCC 204508 / S288c) (Baker's yeast) protein is Monopolin complex subunit LRS4 (LRS4).